Reading from the N-terminus, the 139-residue chain is Actin-depolymerizing factor 2 (139 aa).

One can recognise an ADF-H domain in the interval Gly-7–Asn-139.

It belongs to the actin-binding proteins ADF family. Expressed in pollen.

Its function is as follows. Actin-depolymerizing protein. Severs actin filaments (F-actin) and binds to actin monomers. The protein is Actin-depolymerizing factor 2 (ADF2) of Zea mays (Maize).